A 303-amino-acid chain; its full sequence is Phytochrome-associated serine/threonine-protein phosphatase (303 aa).

The Zn(2+) site is built by D50, H52, D78, and N110. The active-site Proton donor is H111. Zn(2+) is bound by residues H160 and H234.

It belongs to the PPP phosphatase family. PP-6 (PP-V) subfamily. Interacts with PHYA and PHYB, mostly when they are phosphorylated and in Pfr forms. Zn(2+) serves as cofactor. As to expression, mostly expressed in flowers and stems.

It localises to the cytoplasm. The catalysed reaction is O-phospho-L-seryl-[protein] + H2O = L-seryl-[protein] + phosphate. The enzyme catalyses O-phospho-L-threonyl-[protein] + H2O = L-threonyl-[protein] + phosphate. Its function is as follows. Catalytic subunit of protein phosphatase 6 (PP6). Dephosphorylates phosphorylated phytochromes, with a preference toward Pfr forms. Plays a major role in the photoperiodic control of flowering time in long days by modulating phytochrome signals in flowering time control. The protein is Phytochrome-associated serine/threonine-protein phosphatase of Pisum sativum (Garden pea).